The primary structure comprises 151 residues: Ribosome maturation factor RimP (151 aa).

The protein belongs to the RimP family.

It localises to the cytoplasm. Required for maturation of 30S ribosomal subunits. This Shewanella denitrificans (strain OS217 / ATCC BAA-1090 / DSM 15013) protein is Ribosome maturation factor RimP.